Here is a 295-residue protein sequence, read N- to C-terminus: UDP-3-O-acyl-N-acetylglucosamine deacetylase (295 aa).

Zn(2+)-binding residues include His-75, His-232, and Asp-236. The active-site Proton donor is the His-259.

Belongs to the LpxC family. The cofactor is Zn(2+).

The catalysed reaction is a UDP-3-O-[(3R)-3-hydroxyacyl]-N-acetyl-alpha-D-glucosamine + H2O = a UDP-3-O-[(3R)-3-hydroxyacyl]-alpha-D-glucosamine + acetate. It participates in glycolipid biosynthesis; lipid IV(A) biosynthesis; lipid IV(A) from (3R)-3-hydroxytetradecanoyl-[acyl-carrier-protein] and UDP-N-acetyl-alpha-D-glucosamine: step 2/6. In terms of biological role, catalyzes the hydrolysis of UDP-3-O-myristoyl-N-acetylglucosamine to form UDP-3-O-myristoylglucosamine and acetate, the committed step in lipid A biosynthesis. In Helicobacter pylori (strain ATCC 700392 / 26695) (Campylobacter pylori), this protein is UDP-3-O-acyl-N-acetylglucosamine deacetylase.